Consider the following 784-residue polypeptide: Endonuclease MutS2 (784 aa).

An ATP-binding site is contributed by glycine 335–threonine 342. The 76-residue stretch at leucine 709–lysine 784 folds into the Smr domain.

This sequence belongs to the DNA mismatch repair MutS family. MutS2 subfamily. Homodimer. Binds to stalled ribosomes, contacting rRNA.

In terms of biological role, endonuclease that is involved in the suppression of homologous recombination and thus may have a key role in the control of bacterial genetic diversity. Its function is as follows. Acts as a ribosome collision sensor, splitting the ribosome into its 2 subunits. Detects stalled/collided 70S ribosomes which it binds and splits by an ATP-hydrolysis driven conformational change. Acts upstream of the ribosome quality control system (RQC), a ribosome-associated complex that mediates the extraction of incompletely synthesized nascent chains from stalled ribosomes and their subsequent degradation. Probably generates substrates for RQC. This Geobacillus sp. (strain WCH70) protein is Endonuclease MutS2.